Here is a 125-residue protein sequence, read N- to C-terminus: Small ribosomal subunit protein uS13 (125 aa).

Belongs to the universal ribosomal protein uS13 family. As to quaternary structure, part of the 30S ribosomal subunit. Forms a loose heterodimer with protein S19. Forms two bridges to the 50S subunit in the 70S ribosome.

Its function is as follows. Located at the top of the head of the 30S subunit, it contacts several helices of the 16S rRNA. In the 70S ribosome it contacts the 23S rRNA (bridge B1a) and protein L5 of the 50S subunit (bridge B1b), connecting the 2 subunits; these bridges are implicated in subunit movement. Contacts the tRNAs in the A and P-sites. This chain is Small ribosomal subunit protein uS13, found in Gluconacetobacter diazotrophicus (strain ATCC 49037 / DSM 5601 / CCUG 37298 / CIP 103539 / LMG 7603 / PAl5).